We begin with the raw amino-acid sequence, 354 residues long: Pyruvate dehydrogenase E1 component subunit alpha (354 aa).

The interval methionine 1–proline 29 is disordered.

As to quaternary structure, heterodimer of an alpha and a beta chain. The cofactor is thiamine diphosphate.

It catalyses the reaction N(6)-[(R)-lipoyl]-L-lysyl-[protein] + pyruvate + H(+) = N(6)-[(R)-S(8)-acetyldihydrolipoyl]-L-lysyl-[protein] + CO2. The pyruvate dehydrogenase complex catalyzes the overall conversion of pyruvate to acetyl-CoA and CO(2). It contains multiple copies of three enzymatic components: pyruvate dehydrogenase (E1), dihydrolipoamide acetyltransferase (E2) and lipoamide dehydrogenase (E3). This is Pyruvate dehydrogenase E1 component subunit alpha (pdhA) from Zymomonas mobilis subsp. mobilis (strain ATCC 31821 / ZM4 / CP4).